We begin with the raw amino-acid sequence, 229 residues long: Ribonuclease HII (229 aa).

Positions 34–223 constitute an RNase H type-2 domain; sequence WPVAGADEAG…LRKSEDGPEM (190 aa). A divalent metal cation contacts are provided by Asp-40, Glu-41, and Asp-131. The disordered stretch occupies residues 209–229; the sequence is MSFRPLRKSEDGPEMDELIPE. Acidic residues predominate over residues 220–229; sequence GPEMDELIPE.

The protein belongs to the RNase HII family. The cofactor is Mn(2+). Mg(2+) is required as a cofactor.

The protein resides in the cytoplasm. The enzyme catalyses Endonucleolytic cleavage to 5'-phosphomonoester.. Endonuclease that specifically degrades the RNA of RNA-DNA hybrids. This chain is Ribonuclease HII, found in Rhizobium etli (strain CIAT 652).